We begin with the raw amino-acid sequence, 936 residues long: UPF0746 protein DDB_G0280787 (936 aa).

Basic and acidic residues predominate over residues 1–19; the sequence is MISNKRKEIDTIDGHHEKD. The interval 1 to 30 is disordered; that stretch reads MISNKRKEIDTIDGHHEKDNDDDDSDGIDN. The SAP domain occupies 44–78; sequence SGSTNYRELQIIAKSLGLASNGKKQLVYNRIEGYF. Positions 91-110 are disordered; sequence ETNQQEEKKEEEQQQPQPQE.

This sequence belongs to the UPF0746 family.

This is UPF0746 protein DDB_G0280787 from Dictyostelium discoideum (Social amoeba).